A 316-amino-acid chain; its full sequence is Acetaldehyde dehydrogenase 1 (316 aa).

12 to 15 (SGNI) contacts NAD(+). Catalysis depends on Cys132, which acts as the Acyl-thioester intermediate. NAD(+)-binding positions include 163–171 (SAGPGTRAN) and Asn291.

The protein belongs to the acetaldehyde dehydrogenase family.

The enzyme catalyses acetaldehyde + NAD(+) + CoA = acetyl-CoA + NADH + H(+). This chain is Acetaldehyde dehydrogenase 1, found in Pseudomonas putida (strain ATCC 700007 / DSM 6899 / JCM 31910 / BCRC 17059 / LMG 24140 / F1).